A 1165-amino-acid polypeptide reads, in one-letter code: DNA-directed RNA polymerase subunit beta (1165 aa).

Belongs to the RNA polymerase beta chain family. As to quaternary structure, the RNAP catalytic core consists of 2 alpha, 1 beta, 1 beta' and 1 omega subunit. When a sigma factor is associated with the core the holoenzyme is formed, which can initiate transcription.

The catalysed reaction is RNA(n) + a ribonucleoside 5'-triphosphate = RNA(n+1) + diphosphate. Its function is as follows. DNA-dependent RNA polymerase catalyzes the transcription of DNA into RNA using the four ribonucleoside triphosphates as substrates. This Corynebacterium glutamicum (strain ATCC 13032 / DSM 20300 / JCM 1318 / BCRC 11384 / CCUG 27702 / LMG 3730 / NBRC 12168 / NCIMB 10025 / NRRL B-2784 / 534) protein is DNA-directed RNA polymerase subunit beta.